Consider the following 346-residue polypeptide: Dimethyladenosine transferase 1, mitochondrial (346 aa).

Residues 1–27 constitute a mitochondrion transit peptide; sequence MATQGVLAKYRLPPLPTIGEIIKLFNL. Residues Asn36, Leu38, Gly63, Glu85, Lys86, Asp111, Ile112, and Asn141 each coordinate S-adenosyl-L-methionine.

It belongs to the class I-like SAM-binding methyltransferase superfamily. rRNA adenine N(6)-methyltransferase family. KsgA subfamily.

It is found in the mitochondrion. It carries out the reaction adenosine(N)/adenosine(N+1) in rRNA + 4 S-adenosyl-L-methionine = N(6)-dimethyladenosine(N)/N(6)-dimethyladenosine(N+1) in rRNA + 4 S-adenosyl-L-homocysteine + 4 H(+). Functionally, mitochondrial methyltransferase which uses S-adenosyl methionine to dimethylate two highly conserved adjacent adenosine residues (A1583 and A1584) within the loop of helix 45 at the 3-prime end of 12S rRNA, thereby regulating the assembly or stability of the small subunit of the mitochondrial ribosome. Also required for basal transcription of mitochondrial DNA, probably via its interaction with POLRMT and TFAM. Stimulates transcription independently of the methyltransferase activity. The chain is Dimethyladenosine transferase 1, mitochondrial (tfb1m) from Xenopus tropicalis (Western clawed frog).